A 953-amino-acid polypeptide reads, in one-letter code: Isoleucine--tRNA ligase (953 aa).

The 'HIGH' region signature appears at 58 to 68; that stretch reads PYANGFIHLGH. E573 contributes to the L-isoleucyl-5'-AMP binding site. Positions 614–618 match the 'KMSKS' region motif; that stretch reads KMSKS. An ATP-binding site is contributed by K617. Zn(2+)-binding residues include C916, C919, C936, and C939.

It belongs to the class-I aminoacyl-tRNA synthetase family. IleS type 1 subfamily. As to quaternary structure, monomer. Requires Zn(2+) as cofactor.

Its subcellular location is the cytoplasm. It catalyses the reaction tRNA(Ile) + L-isoleucine + ATP = L-isoleucyl-tRNA(Ile) + AMP + diphosphate. In terms of biological role, catalyzes the attachment of isoleucine to tRNA(Ile). As IleRS can inadvertently accommodate and process structurally similar amino acids such as valine, to avoid such errors it has two additional distinct tRNA(Ile)-dependent editing activities. One activity is designated as 'pretransfer' editing and involves the hydrolysis of activated Val-AMP. The other activity is designated 'posttransfer' editing and involves deacylation of mischarged Val-tRNA(Ile). The polypeptide is Isoleucine--tRNA ligase (Blochmanniella floridana).